Consider the following 1024-residue polypeptide: Multidrug resistance protein MdtC (1024 aa).

Helical transmembrane passes span Phe-3–Leu-23, Glu-333–Leu-353, Leu-360–Cys-380, Leu-387–Leu-407, Val-431–Met-451, Phe-463–Pro-483, Trp-528–Pro-548, Leu-853–Ser-873, Val-875–Leu-895, Leu-897–Val-917, Pro-953–Gly-973, and Ile-984–Val-1004.

This sequence belongs to the resistance-nodulation-cell division (RND) (TC 2.A.6) family. MdtC subfamily. In terms of assembly, part of a tripartite efflux system composed of MdtA, MdtB and MdtC. MdtC forms a heteromultimer with MdtB.

The protein localises to the cell inner membrane. The sequence is that of Multidrug resistance protein MdtC from Erwinia amylovora (strain ATCC 49946 / CCPPB 0273 / Ea273 / 27-3).